Consider the following 473-residue polypeptide: Cysteine--tRNA ligase (473 aa).

Position 28 (cysteine 28) interacts with Zn(2+). A 'HIGH' region motif is present at residues 30-40 (PTVYNMPHIGN). Residues cysteine 213, histidine 238, and glutamate 242 each contribute to the Zn(2+) site. Positions 270-274 (KMSKS) match the 'KMSKS' region motif. Lysine 273 contacts ATP.

The protein belongs to the class-I aminoacyl-tRNA synthetase family. Requires Zn(2+) as cofactor.

It localises to the cytoplasm. The enzyme catalyses tRNA(Cys) + L-cysteine + ATP = L-cysteinyl-tRNA(Cys) + AMP + diphosphate. The chain is Cysteine--tRNA ligase from Methanosarcina acetivorans (strain ATCC 35395 / DSM 2834 / JCM 12185 / C2A).